The following is a 1081-amino-acid chain: Histone demethylase-like protein A (1081 aa).

Residues 37-173 (QHLQHPSLPN…LSGNTDYARY (137 aa)) are disordered. Low complexity predominate over residues 66 to 81 (SPSCNESNESNGETSS). Residues 119–132 (DTSNILSGSATSVS) show a composition bias toward polar residues. Residues 141–161 (NSTPPSTVNNVPSSSSITSDS) are compositionally biased toward low complexity. The SWIRM domain maps to 192–287 (CVTAAYACRL…FGCVEIPPAL (96 aa)). The interval 902 to 940 (ATAQKKKEPPCSNGFSAPVSTSAHPTDASAPARSNNSFS) is disordered. The span at 914 to 925 (NGFSAPVSTSAH) shows a compositional bias: polar residues. Positions 969 to 1049 (ARTGLNPFLL…TNTEIWDRWK (81 aa)) form a DNA-binding region, HMG box.

Belongs to the flavin monoamine oxidase family.

It is found in the nucleus. Functionally, H3K4 demethylase-like protein. Might not act as a H3K4 demethylase or is not the major H3K4 demethylase since its deletion does not affect whole genome H3K4 methylation. The sequence is that of Histone demethylase-like protein A from Aspergillus fumigatus (strain ATCC MYA-4609 / CBS 101355 / FGSC A1100 / Af293) (Neosartorya fumigata).